Consider the following 287-residue polypeptide: Putative daunorubicin C-13 ketoreductase DnrU (287 aa).

24–30 (GATSGIG) is a binding site for NADP(+). Residue serine 149 participates in substrate binding. The active-site Proton acceptor is tyrosine 175.

It belongs to the short-chain dehydrogenases/reductases (SDR) family.

In terms of biological role, could reduce the 13-carbonyl of daunorubicin to produce (13S)-13-dihydrodaunorubicin. Could also be able to reduce the 13-carbonyl of doxorubicin. The sequence is that of Putative daunorubicin C-13 ketoreductase DnrU from Streptomyces sp. (strain C5).